A 131-amino-acid chain; its full sequence is Phosphoribosyl-AMP cyclohydrolase (131 aa).

Asp-76 is a Mg(2+) binding site. A Zn(2+)-binding site is contributed by Cys-77. 2 residues coordinate Mg(2+): Asp-78 and Asp-80. Zn(2+)-binding residues include Cys-94 and Cys-101.

Belongs to the PRA-CH family. In terms of assembly, homodimer. Requires Mg(2+) as cofactor. It depends on Zn(2+) as a cofactor.

It is found in the cytoplasm. The catalysed reaction is 1-(5-phospho-beta-D-ribosyl)-5'-AMP + H2O = 1-(5-phospho-beta-D-ribosyl)-5-[(5-phospho-beta-D-ribosylamino)methylideneamino]imidazole-4-carboxamide. Its pathway is amino-acid biosynthesis; L-histidine biosynthesis; L-histidine from 5-phospho-alpha-D-ribose 1-diphosphate: step 3/9. In terms of biological role, catalyzes the hydrolysis of the adenine ring of phosphoribosyl-AMP. In Stutzerimonas stutzeri (strain A1501) (Pseudomonas stutzeri), this protein is Phosphoribosyl-AMP cyclohydrolase.